The following is a 511-amino-acid chain: 2-methylbutanal oxime monooxygenase (511 aa).

Transmembrane regions (helical) follow at residues Pro-10–Phe-30 and Ile-304–Phe-324. Cys-451 serves as a coordination point for heme.

The protein belongs to the cytochrome P450 family. It depends on heme as a cofactor. In terms of tissue distribution, expressed in storage roots, primary roots, petioles and vascular tissues. Expressed in the outer cortex cells, the endodermis and around the xylem, phloem cells and laticifers.

The protein resides in the microsome membrane. It catalyses the reaction (1E,2S)-2-methylbutanal oxime + reduced [NADPH--hemoprotein reductase] + O2 = 2-hydroxy-2-methylbutanenitrile + oxidized [NADPH--hemoprotein reductase] + 2 H2O + H(+). It carries out the reaction (E)-2-methylpropanal oxime + reduced [NADPH--hemoprotein reductase] + O2 = 2-hydroxy-2-methylpropanenitrile + oxidized [NADPH--hemoprotein reductase] + 2 H2O + H(+). In terms of biological role, catalyzes the conversion of (E)-2-methylpropanal oxime (valox) to 2-hydroxy-2-methylpropanenitrile (acetone cyanohydrin) and of (E)-2-methylbutanal oxime (ilox) to 2-hydroxy-2-methylbutyronitrile. The reaction takes place in three steps. First, the oxime is isomerized to the (Z)- isomer, next the (Z)-isomer is dehydrated to the corresponding nitrile, followed by a C-hydroxylation of the nitrile. Can use both aliphatic and aromatic oximes as substrates. This is 2-methylbutanal oxime monooxygenase (CYP71E7) from Manihot esculenta (Cassava).